Consider the following 540-residue polypeptide: ATP-dependent RNA helicase DBP3 (540 aa).

Basic and acidic residues predominate over residues Met1–Asp35. Residues Met1–Lys89 form a disordered region. A compositionally biased stretch (basic residues) spans Lys36–Lys52. Basic and acidic residues-rich tracts occupy residues Glu53–Asp62 and Asp68–Glu79. The short motif at Leu130–Ala156 is the Q motif element. The region spanning Trp159–Val332 is the Helicase ATP-binding domain. Position 172 to 179 (Ala172 to Thr179) interacts with ATP. The DEAD box motif lies at Asp279–Asp282. In terms of domain architecture, Helicase C-terminal spans Lys361–Gly510.

This sequence belongs to the DEAD box helicase family. DDX5/DBP2 subfamily.

Its subcellular location is the nucleus. The protein localises to the nucleolus. The enzyme catalyses ATP + H2O = ADP + phosphate + H(+). Its function is as follows. ATP-dependent RNA helicase required for 60S ribosomal subunit synthesis. Involved in efficient pre-rRNA processing, predominantly at site A3, which is necessary for the normal formation of 25S and 5.8S rRNAs. The polypeptide is ATP-dependent RNA helicase DBP3 (DBP3) (Candida glabrata (strain ATCC 2001 / BCRC 20586 / JCM 3761 / NBRC 0622 / NRRL Y-65 / CBS 138) (Yeast)).